An 82-amino-acid chain; its full sequence is Translational regulator CsrA (82 aa).

It belongs to the CsrA/RsmA family. In terms of assembly, homodimer; the beta-strands of each monomer intercalate to form a hydrophobic core, while the alpha-helices form wings that extend away from the core.

Its subcellular location is the cytoplasm. In terms of biological role, a translational regulator that binds mRNA to regulate translation initiation and/or mRNA stability. Usually binds in the 5'-UTR at or near the Shine-Dalgarno sequence preventing ribosome-binding, thus repressing translation. Its main target seems to be the major flagellin gene, while its function is anatagonized by FliW. This is Translational regulator CsrA from Geobacillus kaustophilus (strain HTA426).